Here is a 718-residue protein sequence, read N- to C-terminus: Effector protein hopM1 (718 aa).

A compositionally biased stretch (gly residues) spans 1–10; it reads MIGTRVGGSG. Disordered regions lie at residues 1-63 and 683-718; these read MIGT…ARLP and GVSS…GRRR. Over residues 11–22 the composition is skewed to polar residues; sequence STEIVQANQPQP. Residues 44–60 show a composition bias toward low complexity; the sequence is ASQSAAQAPESSAAGAA.

Interacts with the chaperone ShcM.

It is found in the secreted. The protein resides in the host membrane. Its function is as follows. Involved in the suppression of basal resistance and promotion of disease symptoms in plants. May be involved in the inhibition of a host vesicle trafficking pathway. The chain is Effector protein hopM1 (hopM1) from Pseudomonas syringae pv. syringae (strain B728a).